Here is a 541-residue protein sequence, read N- to C-terminus: Chaperonin GroEL (541 aa).

ATP-binding positions include 29–32 (TLGP), 86–90 (DGTTT), Gly413, 476–478 (NAA), and Asp492.

Belongs to the chaperonin (HSP60) family. As to quaternary structure, forms a cylinder of 14 subunits composed of two heptameric rings stacked back-to-back. Interacts with the co-chaperonin GroES.

It localises to the cytoplasm. It carries out the reaction ATP + H2O + a folded polypeptide = ADP + phosphate + an unfolded polypeptide.. Functionally, together with its co-chaperonin GroES, plays an essential role in assisting protein folding. The GroEL-GroES system forms a nano-cage that allows encapsulation of the non-native substrate proteins and provides a physical environment optimized to promote and accelerate protein folding. In Streptococcus equi subsp. zooepidemicus (strain H70), this protein is Chaperonin GroEL.